The primary structure comprises 628 residues: Dihydroxy-acid dehydratase (628 aa).

Residue aspartate 80 participates in Mg(2+) binding. Position 121 (cysteine 121) interacts with [2Fe-2S] cluster. Mg(2+) contacts are provided by aspartate 122 and lysine 123. Residue lysine 123 is modified to N6-carboxylysine. Position 207 (cysteine 207) interacts with [2Fe-2S] cluster. Glutamate 503 lines the Mg(2+) pocket. Serine 529 serves as the catalytic Proton acceptor.

The protein belongs to the IlvD/Edd family. In terms of assembly, homodimer. The cofactor is [2Fe-2S] cluster. Requires Mg(2+) as cofactor.

It carries out the reaction (2R)-2,3-dihydroxy-3-methylbutanoate = 3-methyl-2-oxobutanoate + H2O. The enzyme catalyses (2R,3R)-2,3-dihydroxy-3-methylpentanoate = (S)-3-methyl-2-oxopentanoate + H2O. It participates in amino-acid biosynthesis; L-isoleucine biosynthesis; L-isoleucine from 2-oxobutanoate: step 3/4. Its pathway is amino-acid biosynthesis; L-valine biosynthesis; L-valine from pyruvate: step 3/4. In terms of biological role, functions in the biosynthesis of branched-chain amino acids. Catalyzes the dehydration of (2R,3R)-2,3-dihydroxy-3-methylpentanoate (2,3-dihydroxy-3-methylvalerate) into 2-oxo-3-methylpentanoate (2-oxo-3-methylvalerate) and of (2R)-2,3-dihydroxy-3-methylbutanoate (2,3-dihydroxyisovalerate) into 2-oxo-3-methylbutanoate (2-oxoisovalerate), the penultimate precursor to L-isoleucine and L-valine, respectively. The protein is Dihydroxy-acid dehydratase of Psychrobacter arcticus (strain DSM 17307 / VKM B-2377 / 273-4).